The primary structure comprises 357 residues: MAIKMNLASSKVGAKASAKSVRGARLVARVAQPMSPSSAATAAADASMLARAGLPPTTTPYDDYKFAPIREAEVNRAMTRRYFKDMDEFAESDVVIVGAGSAGLACAFELGRIAPHLKVALMEQSVAPGGGAWLGGQLFSAMVVRKPAHEMLDALQVPYEDEGHYVVVRHAALLTSTLMSHVLKNPNVKLFNATAVEDLIVKPDPALGPGGRRVAGVVTNWSLVAQAHGTQSCMDPNVIEAGVVVSACGHDGPFGATGVKRLARLGMVPGGEVPGMGALDMEAAEGSIVNNTREVVPGMVLTGMELAEVDGSPRMGPTFGAMIVSGMRAAHMAVAALERRRALSAAAAEGAAAEAQA.

Substrate is bound by residues Ala102, 123–124 (EQ), Gly131, and Val196. Cys233 is modified (2,3-didehydroalanine (Cys)). Residues Asp235, His250, Met304, and 314-316 (RMG) each bind substrate.

It belongs to the THI4 family. In terms of assembly, homooctamer. Requires Fe cation as cofactor. Post-translationally, during the catalytic reaction, a sulfide is transferred from Cys-233 to a reaction intermediate, generating a dehydroalanine residue.

It is found in the plastid. Its subcellular location is the chloroplast. It carries out the reaction [ADP-thiazole synthase]-L-cysteine + glycine + NAD(+) = [ADP-thiazole synthase]-dehydroalanine + ADP-5-ethyl-4-methylthiazole-2-carboxylate + nicotinamide + 3 H2O + 2 H(+). Involved in biosynthesis of the thiamine precursor thiazole. Catalyzes the conversion of NAD and glycine to adenosine diphosphate 5-(2-hydroxyethyl)-4-methylthiazole-2-carboxylic acid (ADT), an adenylated thiazole intermediate. The reaction includes an iron-dependent sulfide transfer from a conserved cysteine residue of the protein to a thiazole intermediate. The enzyme can only undergo a single turnover, which suggests it is a suicide enzyme. May have additional roles in adaptation to various stress conditions and in DNA damage tolerance. The protein is Thiamine thiazole synthase, chloroplastic of Chlamydomonas reinhardtii (Chlamydomonas smithii).